We begin with the raw amino-acid sequence, 262 residues long: MSGQNSENFIKMHGTGNNFVIIDSCSANDLNWNYKKIANQNGCDQVIVITNSSLADCFMHIYNADGSKAEMCGNAARCVGYLLMSEKGTEYITIELVNKRILECFKVGDKSIKVNMGKPLLKWHKIPLSTECDTLHLPIELEMLKDPVAVNIGNPHIVFFVDSVNEIPLQSLGPKLENHALFPQKINISIAQVEKSGEIALRVWERGTGITASCGSAACAALVTSTLRGYLTVQQTSVNLPGGKLLIEWANNVFMTGDIGFL.

Residues Asn-17, Gln-45, and Asn-63 each coordinate substrate. Cys-72 (proton donor) is an active-site residue. Residues 73–74, Asn-154, Asn-187, and 205–206 each bind substrate; these read GN and ER. Cys-214 (proton acceptor) is an active-site residue. 215 to 216 lines the substrate pocket; it reads GS.

The protein belongs to the diaminopimelate epimerase family. In terms of assembly, homodimer.

The protein localises to the cytoplasm. It catalyses the reaction (2S,6S)-2,6-diaminopimelate = meso-2,6-diaminopimelate. Its pathway is amino-acid biosynthesis; L-lysine biosynthesis via DAP pathway; DL-2,6-diaminopimelate from LL-2,6-diaminopimelate: step 1/1. In terms of biological role, catalyzes the stereoinversion of LL-2,6-diaminopimelate (L,L-DAP) to meso-diaminopimelate (meso-DAP), a precursor of L-lysine and an essential component of the bacterial peptidoglycan. The chain is Diaminopimelate epimerase from Wolbachia sp. subsp. Drosophila simulans (strain wRi).